Here is a 752-residue protein sequence, read N- to C-terminus: Multifunctional tryptophan biosynthesis protein (752 aa).

In terms of domain architecture, Glutamine amidotransferase type-1 spans 23-223 (NVILIDNYDS…LELTAGTWDN (201 aa)). 74–76 (GPG) provides a ligand contact to L-glutamine. Residue cysteine 102 is the Nucleophile; for GATase activity of the active site. L-glutamine is bound by residues glutamine 106 and 152–153 (SL). Active-site for GATase activity residues include histidine 197 and glutamate 199. The indole-3-glycerol phosphate synthase stretch occupies residues 239–503 (ILDKIYAHRK…DTSAFVAQLL (265 aa)). Residues 519–752 (LVKICGTRTE…FVKSAKSIRQ (234 aa)) form an N-(5'-phosphoribosyl)anthranilate isomerase region.

It catalyses the reaction N-(5-phospho-beta-D-ribosyl)anthranilate = 1-(2-carboxyphenylamino)-1-deoxy-D-ribulose 5-phosphate. It carries out the reaction 1-(2-carboxyphenylamino)-1-deoxy-D-ribulose 5-phosphate + H(+) = (1S,2R)-1-C-(indol-3-yl)glycerol 3-phosphate + CO2 + H2O. The catalysed reaction is chorismate + L-glutamine = anthranilate + pyruvate + L-glutamate + H(+). Its pathway is amino-acid biosynthesis; L-tryptophan biosynthesis; L-tryptophan from chorismate: step 1/5. It functions in the pathway amino-acid biosynthesis; L-tryptophan biosynthesis; L-tryptophan from chorismate: step 3/5. It participates in amino-acid biosynthesis; L-tryptophan biosynthesis; L-tryptophan from chorismate: step 4/5. Functionally, trifunctional enzyme bearing the Gln amidotransferase (GATase) domain of anthranilate synthase, indole-glycerolphosphate synthase, and phosphoribosylanthranilate isomerase activities. The polypeptide is Multifunctional tryptophan biosynthesis protein (trpC) (Penicillium chrysogenum (Penicillium notatum)).